Reading from the N-terminus, the 338-residue chain is Mitochondrial glutathione transporter SLC25A40 (338 aa).

3 Solcar repeats span residues 13–131 (VTPL…LSAL), 139–223 (NETC…LKKW), and 233–327 (PTFM…GKAF). Transmembrane regions (helical) follow at residues 19–39 (MLAS…LDVV), 103–123 (LWSG…IYFT), 142–162 (CIPI…ISPL), 199–220 (WAPT…YEIL), 239–259 (FTSG…FDVV), and 298–318 (GLFS…AIMI).

It belongs to the mitochondrial carrier (TC 2.A.29) family.

The protein localises to the mitochondrion inner membrane. It carries out the reaction glutathione(in) = glutathione(out). Its function is as follows. Probable mitochondrial transporter required for glutathione import into mitochondria. Glutathione, which plays key roles in oxidative metabolism, is produced exclusively in the cytosol and is imported in many organelles. Mitochondrial glutathione is required for the activity and stability of proteins containing iron-sulfur clusters, as well as erythropoiesis. This is Mitochondrial glutathione transporter SLC25A40 from Homo sapiens (Human).